The chain runs to 178 residues: ATP synthase subunit delta (178 aa).

Belongs to the ATPase delta chain family. As to quaternary structure, F-type ATPases have 2 components, F(1) - the catalytic core - and F(0) - the membrane proton channel. F(1) has five subunits: alpha(3), beta(3), gamma(1), delta(1), epsilon(1). F(0) has three main subunits: a(1), b(2) and c(10-14). The alpha and beta chains form an alternating ring which encloses part of the gamma chain. F(1) is attached to F(0) by a central stalk formed by the gamma and epsilon chains, while a peripheral stalk is formed by the delta and b chains.

Its subcellular location is the cell membrane. F(1)F(0) ATP synthase produces ATP from ADP in the presence of a proton or sodium gradient. F-type ATPases consist of two structural domains, F(1) containing the extramembraneous catalytic core and F(0) containing the membrane proton channel, linked together by a central stalk and a peripheral stalk. During catalysis, ATP synthesis in the catalytic domain of F(1) is coupled via a rotary mechanism of the central stalk subunits to proton translocation. Its function is as follows. This protein is part of the stalk that links CF(0) to CF(1). It either transmits conformational changes from CF(0) to CF(1) or is implicated in proton conduction. The sequence is that of ATP synthase subunit delta from Streptococcus sanguinis (strain SK36).